The sequence spans 161 residues: Allophycocyanin subunit alpha-B (161 aa).

Asn71 is subject to N4-methylasparagine. Cys81 serves as a coordination point for (2R,3E)-phycocyanobilin.

Belongs to the phycobiliprotein family. Heterohexamer of two alpha chains, one alpha-B chain and three beta chains. Post-translationally, contains one covalently linked bilin chromophore.

Its subcellular location is the cellular thylakoid membrane. In terms of biological role, light-harvesting photosynthetic bile pigment-protein from the phycobiliprotein complex. Allophycocyanin has a maximum absorption at approximately 654 nanometers. In Synechocystis sp. (strain ATCC 27184 / PCC 6803 / Kazusa), this protein is Allophycocyanin subunit alpha-B (apcD).